The following is a 359-amino-acid chain: Peptide chain release factor 1 (359 aa).

Gln-236 is modified (N5-methylglutamine). The interval 288-307 is disordered; that stretch reads QDEQDAERKSTIGTGDRSER. The segment covering 293 to 307 has biased composition (basic and acidic residues); that stretch reads AERKSTIGTGDRSER.

It belongs to the prokaryotic/mitochondrial release factor family. Methylated by PrmC. Methylation increases the termination efficiency of RF1.

It localises to the cytoplasm. Its function is as follows. Peptide chain release factor 1 directs the termination of translation in response to the peptide chain termination codons UAG and UAA. The protein is Peptide chain release factor 1 (prfA) of Streptococcus gordonii (strain Challis / ATCC 35105 / BCRC 15272 / CH1 / DL1 / V288).